The following is a 76-amino-acid chain: Vasotab (76 aa).

Positions 1–20 (MKFALFSVLVVLLIATFVAA) are cleaved as a signal peptide. A Kazal-like domain is found at 21–76 (DECPRICTADYRPVCGTPSGGRRSANRTFGNQCSLNAHNCLNKGDTYDKLHDGECK). Intrachain disulfides connect cysteine 23/cysteine 60, cysteine 27/cysteine 53, and cysteine 35/cysteine 75.

Expressed by the salivary gland.

The protein resides in the secreted. Functionally, vasodilator protein that inhibits vasoconstriction of isolated rat femoral artery induced by phenylephrine. Since platelet aggregation and vasoconstriction are key hemostatic responses, particularly in small wounds, this protein likely participates in the antihemostatic responses during blood feeding. Blocks L-type calcium channels (Cav1/CACNA1) in left ventricular myocytes isolated from rat hearts. This is Vasotab from Hybomitra bimaculata (Horse fly).